The chain runs to 225 residues: NAD(P)H-quinone oxidoreductase subunit K, chloroplastic (225 aa).

[4Fe-4S] cluster-binding residues include C43, C44, C108, and C139.

This sequence belongs to the complex I 20 kDa subunit family. NDH is composed of at least 16 different subunits, 5 of which are encoded in the nucleus. The cofactor is [4Fe-4S] cluster.

The protein localises to the plastid. The protein resides in the chloroplast thylakoid membrane. It catalyses the reaction a plastoquinone + NADH + (n+1) H(+)(in) = a plastoquinol + NAD(+) + n H(+)(out). It carries out the reaction a plastoquinone + NADPH + (n+1) H(+)(in) = a plastoquinol + NADP(+) + n H(+)(out). Its function is as follows. NDH shuttles electrons from NAD(P)H:plastoquinone, via FMN and iron-sulfur (Fe-S) centers, to quinones in the photosynthetic chain and possibly in a chloroplast respiratory chain. The immediate electron acceptor for the enzyme in this species is believed to be plastoquinone. Couples the redox reaction to proton translocation, and thus conserves the redox energy in a proton gradient. The chain is NAD(P)H-quinone oxidoreductase subunit K, chloroplastic from Crucihimalaya wallichii (Rock-cress).